Here is a 211-residue protein sequence, read N- to C-terminus: Large ribosomal subunit protein bL25 (211 aa).

Belongs to the bacterial ribosomal protein bL25 family. CTC subfamily. Part of the 50S ribosomal subunit; part of the 5S rRNA/L5/L18/L25 subcomplex. Contacts the 5S rRNA. Binds to the 5S rRNA independently of L5 and L18.

Functionally, this is one of the proteins that binds to the 5S RNA in the ribosome where it forms part of the central protuberance. This Xanthomonas axonopodis pv. citri (strain 306) protein is Large ribosomal subunit protein bL25.